The sequence spans 374 residues: Queuine tRNA-ribosyltransferase (374 aa).

Residue D89 is the Proton acceptor of the active site. Substrate contacts are provided by residues 89 to 93 (DSGGF), D143, Q187, and G214. Residues 245 to 251 (GVGKPED) are RNA binding. The Nucleophile role is filled by D264. The segment at 269–273 (TRNAR) is RNA binding; important for wobble base 34 recognition. Positions 302, 304, 307, and 333 each coordinate Zn(2+).

This sequence belongs to the queuine tRNA-ribosyltransferase family. Homodimer. Within each dimer, one monomer is responsible for RNA recognition and catalysis, while the other monomer binds to the replacement base PreQ1. Zn(2+) serves as cofactor.

The catalysed reaction is 7-aminomethyl-7-carbaguanine + guanosine(34) in tRNA = 7-aminomethyl-7-carbaguanosine(34) in tRNA + guanine. The protein operates within tRNA modification; tRNA-queuosine biosynthesis. Its function is as follows. Catalyzes the base-exchange of a guanine (G) residue with the queuine precursor 7-aminomethyl-7-deazaguanine (PreQ1) at position 34 (anticodon wobble position) in tRNAs with GU(N) anticodons (tRNA-Asp, -Asn, -His and -Tyr). Catalysis occurs through a double-displacement mechanism. The nucleophile active site attacks the C1' of nucleotide 34 to detach the guanine base from the RNA, forming a covalent enzyme-RNA intermediate. The proton acceptor active site deprotonates the incoming PreQ1, allowing a nucleophilic attack on the C1' of the ribose to form the product. After dissociation, two additional enzymatic reactions on the tRNA convert PreQ1 to queuine (Q), resulting in the hypermodified nucleoside queuosine (7-(((4,5-cis-dihydroxy-2-cyclopenten-1-yl)amino)methyl)-7-deazaguanosine). The polypeptide is Queuine tRNA-ribosyltransferase (Shewanella loihica (strain ATCC BAA-1088 / PV-4)).